The primary structure comprises 912 residues: Protein translocase subunit SecA (912 aa).

ATP-binding positions include Gln87, 105 to 109 (GEGKT), and Asp499. Residues Cys897, Cys899, Cys908, and His909 each contribute to the Zn(2+) site.

The protein belongs to the SecA family. In terms of assembly, monomer and homodimer. Part of the essential Sec protein translocation apparatus which comprises SecA, SecYEG and auxiliary proteins SecDF-YajC and YidC. The cofactor is Zn(2+).

Its subcellular location is the cell inner membrane. It is found in the cytoplasm. The enzyme catalyses ATP + H2O + cellular proteinSide 1 = ADP + phosphate + cellular proteinSide 2.. Part of the Sec protein translocase complex. Interacts with the SecYEG preprotein conducting channel. Has a central role in coupling the hydrolysis of ATP to the transfer of proteins into and across the cell membrane, serving both as a receptor for the preprotein-SecB complex and as an ATP-driven molecular motor driving the stepwise translocation of polypeptide chains across the membrane. The protein is Protein translocase subunit SecA of Rhizorhabdus wittichii (strain DSM 6014 / CCUG 31198 / JCM 15750 / NBRC 105917 / EY 4224 / RW1) (Sphingomonas wittichii).